Reading from the N-terminus, the 431-residue chain is BEL1-like homeodomain protein 5 (431 aa).

Positions 80 to 96 (PIYLKAAQELLNEIVNV) are SR/KY domain. Positions 128 to 199 (GVAALQMKKA…AVKDMISLQI (72 aa)) are BELL domain. Positions 228 to 290 (AWRPQRGLPE…NARVRMWKPL (63 aa)) form a DNA-binding region, homeobox. Positions 302–312 (EESRKGSDRYS) are enriched in basic and acidic residues. The interval 302–333 (EESRKGSDRYSTKGSSSKQPYNNTTSNESSNT) is disordered. Polar residues predominate over residues 313–322 (TKGSSSKQPY). Residues 323–333 (NNTTSNESSNT) are compositionally biased toward low complexity.

This sequence belongs to the TALE/BELL homeobox family. May form heterodimeric complexes with TALE/KNOX proteins. Interacts with OFP1.

It is found in the nucleus. The polypeptide is BEL1-like homeodomain protein 5 (BLH5) (Arabidopsis thaliana (Mouse-ear cress)).